The sequence spans 301 residues: D-alanine--D-alanine ligase A (301 aa).

Residues 99 to 293 enclose the ATP-grasp domain; it reads KRILAFGNVR…FEELLDTIIE (195 aa). 126–181 contacts ATP; sequence IENLGYPVFVKPNNGGSSVATTLVESKEAVKDAVLEALKYDTEVMIEEYIKGDEIT. Residues Asp-248, Glu-260, and Asn-262 each coordinate Mg(2+).

This sequence belongs to the D-alanine--D-alanine ligase family. Mg(2+) serves as cofactor. Mn(2+) is required as a cofactor.

The protein localises to the cytoplasm. It carries out the reaction 2 D-alanine + ATP = D-alanyl-D-alanine + ADP + phosphate + H(+). Its pathway is cell wall biogenesis; peptidoglycan biosynthesis. In terms of biological role, cell wall formation. The protein is D-alanine--D-alanine ligase A of Clostridium perfringens (strain 13 / Type A).